The primary structure comprises 133 residues: CDGSH iron-sulfur domain-containing protein 2 homolog (133 aa).

At 1–35 (MEPISHLVKSSLPNYLSSLPIPDSVGGWFKLSFKD) the chain is on the lumenal side. Residues 36-58 (WLALIPPTVVVAGIGYTAYLAYC) form a helical membrane-spanning segment. Over 59-133 (PAAKAICSAK…DNVGPIVIKK (75 aa)) the chain is Cytoplasmic. [2Fe-2S] cluster-binding residues include C100, C102, C111, and H115.

This sequence belongs to the CISD protein family. CISD2 subfamily. It depends on [2Fe-2S] cluster as a cofactor.

Its subcellular location is the endoplasmic reticulum membrane. This chain is CDGSH iron-sulfur domain-containing protein 2 homolog, found in Drosophila yakuba (Fruit fly).